The chain runs to 171 residues: S-ribosylhomocysteine lyase (171 aa).

Fe cation-binding residues include histidine 54, histidine 58, and cysteine 128.

The protein belongs to the LuxS family. As to quaternary structure, homodimer. The cofactor is Fe cation.

The catalysed reaction is S-(5-deoxy-D-ribos-5-yl)-L-homocysteine = (S)-4,5-dihydroxypentane-2,3-dione + L-homocysteine. Involved in the synthesis of autoinducer 2 (AI-2) which is secreted by bacteria and is used to communicate both the cell density and the metabolic potential of the environment. The regulation of gene expression in response to changes in cell density is called quorum sensing. Catalyzes the transformation of S-ribosylhomocysteine (RHC) to homocysteine (HC) and 4,5-dihydroxy-2,3-pentadione (DPD). In Escherichia coli O157:H7, this protein is S-ribosylhomocysteine lyase.